The following is a 151-amino-acid chain: UPF0208 membrane protein SG1605 (151 aa).

2 helical membrane-spanning segments follow: residues Phe46–Ala64 and Gly70–Leu90.

Belongs to the UPF0208 family.

It localises to the cell inner membrane. The chain is UPF0208 membrane protein SG1605 from Sodalis glossinidius (strain morsitans).